The sequence spans 512 residues: Probable cobyric acid synthase (512 aa).

Residues 275–460 (SVTVAVPHLP…LHGLFGNDAA (186 aa)) form the GATase cobBQ-type domain. Cys-353 serves as the catalytic Nucleophile. Residue His-452 is part of the active site.

The protein belongs to the CobB/CobQ family. CobQ subfamily.

Its pathway is cofactor biosynthesis; adenosylcobalamin biosynthesis. Catalyzes amidations at positions B, D, E, and G on adenosylcobyrinic A,C-diamide. NH(2) groups are provided by glutamine, and one molecule of ATP is hydrogenolyzed for each amidation. In Halobacterium salinarum (strain ATCC 29341 / DSM 671 / R1), this protein is Probable cobyric acid synthase.